Reading from the N-terminus, the 424-residue chain is Dehydrogenase FUM7 (424 aa).

Belongs to the iron-containing alcohol dehydrogenase family. Fe cation serves as cofactor.

It functions in the pathway mycotoxin biosynthesis. Functionally, dehydrogenase; part of the gene cluster that mediates the biosynthesis of fumonisins B1 (FB1), B2 (FB2), B3 (FB3), and B4 (FB4), which are carcinogenic mycotoxins. Within the pathway, FUM7 is involved the addition of the tricarballylic moieties to the carbon backbone. FUM7 dehydrogenase removes the C-3 hydroxyl of citrate to form tricarballylic acid either before or after the CoA activation by the FUM10 acyl-CoA synthetase and FUM14 catalyzed esterification of CoA-activated tricarballylic acid to the C-14 and C-15 hydroxyls of the fumonisin backbone. The biosynthesis starts with the FUM1-catalyzed carbon chain assembly from one molecule of acetyl-CoA, eight molecules of malonyl-CoA, and two molecules of methionine (in S-adenosyl form). The C18 polyketide chain is released from the enzyme by a nucleophilic attack of a carbanion, which is derived from R-carbon of alanine by decarboxylation, on the carbonyl carbon of polyketide acyl chain. This step is catalyzed by the pyridoxal 5'-phosphate-dependent aminoacyl transferase FUM8. The resultant 3-keto intermediate is then stereospecifically reduced to a 3-hydroxyl product by reductase FUM13. Subsequent oxidations at C-10 by the cytochrome P450 monooxygenase FUM2, C-14 and C-15 by FUM6, FUM12 or FUM15, tricarballylic esterification of the hydroxyl groups on C-14 and C-15 by acyltransferase FUM14, and C-5 hydroxylation by 2-keto-glutarate-dependent dioxygenase FUM3 furnish the biosynthesis of fumonisins. The tricarballylic moieties are most likely derived from the citric acid cycle, and their addition to the carbon backbone may involve FUM7, FUM10, FUM11 and FUM14. The chain is Dehydrogenase FUM7 from Gibberella moniliformis (strain M3125 / FGSC 7600) (Maize ear and stalk rot fungus).